The chain runs to 795 residues: Glutamine--tRNA ligase, cytoplasmic (795 aa).

Positions 188 to 220 are disordered; it reads ADNEKPTKKKEKKEKPAKVEEKKAVVETTAEPS. Over residues 200–212 the composition is skewed to basic and acidic residues; the sequence is KEKPAKVEEKKAV. The 'HIGH' region motif lies at 277–287; that stretch reads PEPNGYLHIGH. Residues 278 to 280 and 284 to 290 contribute to the ATP site; these read EPN and HIGHAKA. Positions 310 and 450 each coordinate L-glutamine. ATP is bound by residues threonine 469, 498–499, and 506–508; these read RL and MSK. The short motif at 505–509 is the 'KMSKS' region element; it reads VMSKR.

It belongs to the class-I aminoacyl-tRNA synthetase family.

Its subcellular location is the cytoplasm. It is found in the cytosol. The enzyme catalyses tRNA(Gln) + L-glutamine + ATP = L-glutaminyl-tRNA(Gln) + AMP + diphosphate. The chain is Glutamine--tRNA ligase, cytoplasmic from Arabidopsis thaliana (Mouse-ear cress).